The following is a 120-amino-acid chain: Large ribosomal subunit protein bL19c (120 aa).

Belongs to the bacterial ribosomal protein bL19 family.

It is found in the plastid. The protein resides in the chloroplast. The polypeptide is Large ribosomal subunit protein bL19c (rpl19) (Trieres chinensis (Marine centric diatom)).